A 270-amino-acid chain; its full sequence is tRNA pseudouridine synthase A (270 aa).

Asp60 (nucleophile) is an active-site residue. Position 118 (Tyr118) interacts with substrate.

The protein belongs to the tRNA pseudouridine synthase TruA family. Homodimer.

It catalyses the reaction uridine(38/39/40) in tRNA = pseudouridine(38/39/40) in tRNA. In terms of biological role, formation of pseudouridine at positions 38, 39 and 40 in the anticodon stem and loop of transfer RNAs. The protein is tRNA pseudouridine synthase A of Salmonella typhimurium (strain LT2 / SGSC1412 / ATCC 700720).